We begin with the raw amino-acid sequence, 309 residues long: PI-PLC X domain-containing protein 1 (309 aa).

Residues 17–193 (HMWDIPLWNL…QVILSYDDES (177 aa)) enclose the PI-PLC X-box domain.

This is PI-PLC X domain-containing protein 1 (plcxd1) from Danio rerio (Zebrafish).